A 562-amino-acid chain; its full sequence is MFS-type efflux pump elcC (562 aa).

The next 11 helical transmembrane spans lie at W50–P70, V80–F100, G111–F131, L139–V159, L184–G204, I215–W235, I257–F277, S288–G308, M309–V329, V351–A371, and V383–F403. A glycan (N-linked (GlcNAc...) asparagine) is linked at N448. The chain crosses the membrane as a helical span at residues F455–L475. A disordered region spans residues E515–N562. The span at N533–N554 shows a compositional bias: polar residues.

The protein belongs to the major facilitator superfamily. TCR/Tet family.

The protein localises to the cell membrane. In terms of biological role, MFS-type efflux pump; part of the gene cluster that mediates the biosynthesis of elsinochrome C, a perelyenequinone phytotoxin structurally similar to cercosporin. This is MFS-type efflux pump elcC from Phaeosphaeria nodorum (strain SN15 / ATCC MYA-4574 / FGSC 10173) (Glume blotch fungus).